We begin with the raw amino-acid sequence, 259 residues long: MLFNIANSVGKRTVKFAQSVGSFSLFSFAAVSSIIRPPLYLSLIIRQLLFIGFHSLPVVAMTTFFSGAVLALQSYIGFSRFSAESSIATVVVLSLTRELGPVLAGLMVAGRVGASIAAEIATMRVTEQIDALYTLSTDPIKYLVFPRVITAIITMPCLVLIGDIIGVMGGYLVGVYKLDFNSAAYLTSTFQYLEPIDVISGLVKAGVFGFIISIISCYSGYYSGKGAKGVGRATTSAVVNSSILILISNYLITELFFKV.

5 helical membrane passes run 13 to 35 (TVKF…SSII), 49 to 69 (LFIG…SGAV), 148 to 168 (VITA…IGVM), 195 to 215 (PIDV…ISII), and 237 to 257 (AVVN…ELFF).

The protein belongs to the MlaE permease family.

Its subcellular location is the cell inner membrane. Could be part of an ABC transporter complex. This is Probable ABC transporter permease protein RC0129 from Rickettsia conorii (strain ATCC VR-613 / Malish 7).